The following is a 204-amino-acid chain: Holliday junction branch migration complex subunit RuvA (204 aa).

Residues 1–64 are domain I; it reads MIAKLTGILD…ETDQRLIGFT (64 aa). A domain II region spans residues 65–143; the sequence is SAGERAWFRL…GLAGYASPVG (79 aa). The interval 144-154 is flexible linker; sequence PGGEAFVAPPG. A domain III region spans residues 154–204; that stretch reads GNASADAVSALQNLGFKPAVASSAVAAAVKELGEDAGLNDLVRVALKRAAG.

It belongs to the RuvA family. As to quaternary structure, homotetramer. Forms an RuvA(8)-RuvB(12)-Holliday junction (HJ) complex. HJ DNA is sandwiched between 2 RuvA tetramers; dsDNA enters through RuvA and exits via RuvB. An RuvB hexamer assembles on each DNA strand where it exits the tetramer. Each RuvB hexamer is contacted by two RuvA subunits (via domain III) on 2 adjacent RuvB subunits; this complex drives branch migration. In the full resolvosome a probable DNA-RuvA(4)-RuvB(12)-RuvC(2) complex forms which resolves the HJ.

The protein resides in the cytoplasm. Its function is as follows. The RuvA-RuvB-RuvC complex processes Holliday junction (HJ) DNA during genetic recombination and DNA repair, while the RuvA-RuvB complex plays an important role in the rescue of blocked DNA replication forks via replication fork reversal (RFR). RuvA specifically binds to HJ cruciform DNA, conferring on it an open structure. The RuvB hexamer acts as an ATP-dependent pump, pulling dsDNA into and through the RuvAB complex. HJ branch migration allows RuvC to scan DNA until it finds its consensus sequence, where it cleaves and resolves the cruciform DNA. In Novosphingobium aromaticivorans (strain ATCC 700278 / DSM 12444 / CCUG 56034 / CIP 105152 / NBRC 16084 / F199), this protein is Holliday junction branch migration complex subunit RuvA.